A 312-amino-acid chain; its full sequence is Ribonuclease Z (312 aa).

The Zn(2+) site is built by His62, His64, Asp66, His67, His144, Asp215, and His273. Catalysis depends on Asp66, which acts as the Proton acceptor.

It belongs to the RNase Z family. As to quaternary structure, homodimer. Zn(2+) serves as cofactor.

The catalysed reaction is Endonucleolytic cleavage of RNA, removing extra 3' nucleotides from tRNA precursor, generating 3' termini of tRNAs. A 3'-hydroxy group is left at the tRNA terminus and a 5'-phosphoryl group is left at the trailer molecule.. In terms of biological role, zinc phosphodiesterase, which displays some tRNA 3'-processing endonuclease activity. Probably involved in tRNA maturation, by removing a 3'-trailer from precursor tRNA. The sequence is that of Ribonuclease Z from Prochlorococcus marinus (strain MIT 9215).